The chain runs to 411 residues: Serine hydroxymethyltransferase (411 aa).

(6S)-5,6,7,8-tetrahydrofolate is bound by residues L119 and 123–125 (GHL). Position 228 is an N6-(pyridoxal phosphate)lysine (K228).

Belongs to the SHMT family. As to quaternary structure, homodimer. Pyridoxal 5'-phosphate serves as cofactor.

It localises to the cytoplasm. The enzyme catalyses (6R)-5,10-methylene-5,6,7,8-tetrahydrofolate + glycine + H2O = (6S)-5,6,7,8-tetrahydrofolate + L-serine. The protein operates within one-carbon metabolism; tetrahydrofolate interconversion. Its pathway is amino-acid biosynthesis; glycine biosynthesis; glycine from L-serine: step 1/1. Functionally, catalyzes the reversible interconversion of serine and glycine with tetrahydrofolate (THF) serving as the one-carbon carrier. This reaction serves as the major source of one-carbon groups required for the biosynthesis of purines, thymidylate, methionine, and other important biomolecules. Also exhibits THF-independent aldolase activity toward beta-hydroxyamino acids, producing glycine and aldehydes, via a retro-aldol mechanism. In Clostridium kluyveri (strain NBRC 12016), this protein is Serine hydroxymethyltransferase.